The primary structure comprises 602 residues: ATP-dependent lipid A-core flippase (602 aa).

The next 5 helical transmembrane spans lie at 28-48 (VGIFLLSIVGFVIFASTQPML), 84-104 (LLIILIAAWQGLGSFLGNYFL), 158-178 (IKVVIREGLTVVFLFAYLLWM), 180-200 (WHLTLVMVAILPVIAVMVSIA), and 268-288 (PMLQLVIYSAMAALMFLVLFL). The region spanning 32 to 323 (LLSIVGFVIF…LSEVSSTIQK (292 aa)) is the ABC transmembrane type-1 domain. In terms of domain architecture, ABC transporter spans 355 to 591 (LEVRNLSFTY…NGHYARLHAM (237 aa)). 389 to 396 (GRSGSGKS) is an ATP binding site.

Belongs to the ABC transporter superfamily. Lipid exporter (TC 3.A.1.106) family. In terms of assembly, homodimer.

The protein localises to the cell inner membrane. It catalyses the reaction ATP + H2O + lipid A-core oligosaccharideSide 1 = ADP + phosphate + lipid A-core oligosaccharideSide 2.. Its function is as follows. Involved in lipopolysaccharide (LPS) biosynthesis. Translocates lipid A-core from the inner to the outer leaflet of the inner membrane. Transmembrane domains (TMD) form a pore in the inner membrane and the ATP-binding domain (NBD) is responsible for energy generation. The protein is ATP-dependent lipid A-core flippase of Pseudomonas putida (strain ATCC 47054 / DSM 6125 / CFBP 8728 / NCIMB 11950 / KT2440).